The chain runs to 231 residues: Adenylate kinase (231 aa).

Gly12–Thr17 is an ATP binding site. The interval Ser32–Val61 is NMP. AMP-binding positions include Thr33, Arg38, Gly59–Val61, Gly87–Arg90, and Gln94. Positions Gly124–Asp161 are LID. ATP-binding positions include Arg125 and Thr134–Tyr135. AMP is bound by residues Arg158 and Arg169. Gly205 lines the ATP pocket.

The protein belongs to the adenylate kinase family. As to quaternary structure, monomer.

The protein localises to the cytoplasm. It carries out the reaction AMP + ATP = 2 ADP. Its pathway is purine metabolism; AMP biosynthesis via salvage pathway; AMP from ADP: step 1/1. Its function is as follows. Catalyzes the reversible transfer of the terminal phosphate group between ATP and AMP. Plays an important role in cellular energy homeostasis and in adenine nucleotide metabolism. This chain is Adenylate kinase, found in Coxiella burnetii (strain CbuK_Q154) (Coxiella burnetii (strain Q154)).